A 286-amino-acid chain; its full sequence is Shikimate dehydrogenase (NADP(+)) (286 aa).

Shikimate-binding positions include 20–22 (SLS) and Thr-67. Lys-71 acts as the Proton acceptor in catalysis. The shikimate site is built by Asn-92 and Asp-107. NADP(+) is bound by residues 132–136 (GAGGA) and Met-228. A shikimate-binding site is contributed by Tyr-230. NADP(+) is bound at residue Gly-251.

It belongs to the shikimate dehydrogenase family. As to quaternary structure, homodimer.

The catalysed reaction is shikimate + NADP(+) = 3-dehydroshikimate + NADPH + H(+). Its pathway is metabolic intermediate biosynthesis; chorismate biosynthesis; chorismate from D-erythrose 4-phosphate and phosphoenolpyruvate: step 4/7. Functionally, involved in the biosynthesis of the chorismate, which leads to the biosynthesis of aromatic amino acids. Catalyzes the reversible NADPH linked reduction of 3-dehydroshikimate (DHSA) to yield shikimate (SA). The chain is Shikimate dehydrogenase (NADP(+)) from Geobacter sulfurreducens (strain ATCC 51573 / DSM 12127 / PCA).